The following is a 173-amino-acid chain: Orotate phosphoribosyltransferase (173 aa).

5-phospho-alpha-D-ribose 1-diphosphate contacts are provided by residues arginine 87, lysine 88, lysine 91, and 113-121 (EDIATTGQS). Orotate is bound by residues threonine 117 and arginine 145.

This sequence belongs to the purine/pyrimidine phosphoribosyltransferase family. PyrE subfamily. As to quaternary structure, homodimer. Mg(2+) serves as cofactor.

The catalysed reaction is orotidine 5'-phosphate + diphosphate = orotate + 5-phospho-alpha-D-ribose 1-diphosphate. It participates in pyrimidine metabolism; UMP biosynthesis via de novo pathway; UMP from orotate: step 1/2. Catalyzes the transfer of a ribosyl phosphate group from 5-phosphoribose 1-diphosphate to orotate, leading to the formation of orotidine monophosphate (OMP). This is Orotate phosphoribosyltransferase from Natronomonas pharaonis (strain ATCC 35678 / DSM 2160 / CIP 103997 / JCM 8858 / NBRC 14720 / NCIMB 2260 / Gabara) (Halobacterium pharaonis).